A 143-amino-acid chain; its full sequence is Large ribosomal subunit protein uL16 (143 aa).

The segment covering 1–17 (MLQPKRTKFRKAHKGRI) has biased composition (basic residues). Positions 1–21 (MLQPKRTKFRKAHKGRIHGNA) are disordered.

Belongs to the universal ribosomal protein uL16 family. Part of the 50S ribosomal subunit.

Functionally, binds 23S rRNA and is also seen to make contacts with the A and possibly P site tRNAs. This chain is Large ribosomal subunit protein uL16, found in Rhizorhabdus wittichii (strain DSM 6014 / CCUG 31198 / JCM 15750 / NBRC 105917 / EY 4224 / RW1) (Sphingomonas wittichii).